The chain runs to 851 residues: M-phase phosphoprotein 8 (851 aa).

Residues 21 to 54 (NIGRSPEVEGGGAAGEEKDAATKGTVAVGDSEED) are disordered. Ser51, Ser85, and Ser136 each carry phosphoserine. The region spanning 59–118 (FEVERILDMKCEGGKNLYKVRWKGYTSDDDTWEPEVHLEDCKEVLLEFRKKVAENKAKAV) is the Chromo domain. The histone H3K9me3 binding stretch occupies residues 80 to 87 (WKGYTSDD). The tract at residues 133 to 174 (EADSDIDQQGDTKEDTSPRKKKKKIKYKEDKSPDDLRKKRAK) is disordered. Position 144 is a phosphothreonine (Thr144). 2 positions are modified to phosphoserine; by CDK1: Ser149 and Ser164. A compositionally biased stretch (basic and acidic residues) spans 159-169 (YKEDKSPDDLR). Ser188, Ser263, Ser267, and Ser274 each carry phosphoserine. Positions 240–302 (REDVKDNRKT…KTGQDTVQES (63 aa)) are disordered. Residues 269–278 (TLEDESEDFL) are compositionally biased toward acidic residues. The segment covering 279-295 (SDNKEKQNVRTAKDKTG) has biased composition (basic and acidic residues). Residue Ser313 is modified to Phosphoserine. Residues 315-428 (EEAGTRVRRK…DKEEKARKEP (114 aa)) are disordered. The span at 329-364 (RKFEEPKEIKKLENTNNFLERKMIPKKQRNQDKGRS) shows a compositional bias: basic and acidic residues. Position 379 is a phosphothreonine; by CDK1 (Thr379). Residues Ser386 and Ser394 each carry the phosphoserine modification. Residues 401–428 (EKERKNEPKEKYQKRYDFDKEEKARKEP) show a composition bias toward basic and acidic residues. At Thr447 the chain carries Phosphothreonine. ANK repeat units follow at residues 591-620 (TGMT…KVNG), 624-653 (NGTT…FVNV), 657-686 (NGET…DCNI), and 690-719 (HQNS…TLSR).

As to quaternary structure, homodimer. Interacts (via chromo domain) with histone H3K9me3. Has the highest affinity for H3K9me3, and lesser affinity for H3K9me2 and H3K9me1. Component of the HUSH complex; at least composed of TASOR, PPHLN1 and MPHOSPH8. Interacts with DNMT3, EHMT1 and SETDB1. Interacts with MORC2; the interaction associateS MORC2 with the HUSH complex which recruits MORC2 to heterochromatic loci. Interacts with ZNF638; leading to recruitment of the HUSH complex to unintegrated retroviral DNA. Interacts with TASOR. Phosphorylated in M (mitotic) phase. Phosphorylation by CDK1 promotes dissociation from chromatin.

It localises to the nucleus. The protein resides in the chromosome. Functionally, heterochromatin component that specifically recognizes and binds methylated 'Lys-9' of histone H3 (H3K9me) and promotes recruitment of proteins that mediate epigenetic repression. Mediates recruitment of the HUSH complex to H3K9me3 sites: the HUSH complex is recruited to genomic loci rich in H3K9me3 and is required to maintain transcriptional silencing by promoting recruitment of SETDB1, a histone methyltransferase that mediates further deposition of H3K9me3, as well as MORC2. Binds H3K9me and promotes DNA methylation by recruiting DNMT3A to target CpG sites; these can be situated within the coding region of the gene. Mediates down-regulation of CDH1 expression. Also represses L1 retrotransposons in collaboration with MORC2 and, probably, SETDB1, the silencing is dependent of repressive epigenetic modifications, such as H3K9me3 mark. Silencing events often occur within introns of transcriptionally active genes, and lead to the down-regulation of host gene expression. The HUSH complex is also involved in the silencing of unintegrated retroviral DNA by being recruited by ZNF638: some part of the retroviral DNA formed immediately after infection remains unintegrated in the host genome and is transcriptionally repressed. In Rattus norvegicus (Rat), this protein is M-phase phosphoprotein 8.